The chain runs to 490 residues: GTPase Der (490 aa).

2 consecutive EngA-type G domains span residues 3-166 and 203-376; these read PVVA…MEDL and IKLA…DSST. Residues 9 to 16, 56 to 60, 118 to 121, 209 to 216, 256 to 260, and 321 to 324 contribute to the GTP site; these read GRPNVGKS, DTGGI, NKTD, DTAGV, and NKWD. A KH-like domain is found at 377-461; the sequence is RRVGTSMLTR…PIRIQFKEGE (85 aa).

This sequence belongs to the TRAFAC class TrmE-Era-EngA-EngB-Septin-like GTPase superfamily. EngA (Der) GTPase family. Associates with the 50S ribosomal subunit.

GTPase that plays an essential role in the late steps of ribosome biogenesis. This Escherichia coli O157:H7 protein is GTPase Der.